Here is a 422-residue protein sequence, read N- to C-terminus: tRNA hydroxylation protein P (422 aa).

The N-terminal stretch at 1 to 58 is a signal peptide; sequence MNQVELLSPAGNLKKLKIALNYGADAVYGGVSHFSLRNRAGKEFTLETFKEGIDYAHA.

This sequence belongs to the peptidase U32 family.

In terms of biological role, involved in prephenate-dependent formation of 5-hydroxyuridine (ho5U) modification at position 34 in tRNAs, the first step in 5-carboxymethoxyuridine (cmo5U) biosynthesis. The chain is tRNA hydroxylation protein P from Helicobacter pylori (strain J99 / ATCC 700824) (Campylobacter pylori J99).